Consider the following 397-residue polypeptide: ORC1-type DNA replication protein 1 (397 aa).

ATP-binding positions include 67–71 (TGKTA), Y208, and R220.

It belongs to the CDC6/cdc18 family.

Functionally, involved in regulation of DNA replication. This Sulfolobus acidocaldarius (strain ATCC 33909 / DSM 639 / JCM 8929 / NBRC 15157 / NCIMB 11770) protein is ORC1-type DNA replication protein 1 (cdc6-1).